The primary structure comprises 249 residues: Kallikrein-7 (249 aa).

Positions 1 to 21 (MGVWLLSLITVLLSLALETAG) are cleaved as a signal peptide. Positions 22–25 (QGER) are cleaved as a propeptide — activation peptide. Positions 26–246 (IIDGYKCKEG…YKRWVMETMK (221 aa)) are serine protease. 6 cysteine pairs are disulfide-bonded: Cys32–Cys161, Cys51–Cys67, Cys133–Cys235, Cys140–Cys207, Cys172–Cys186, and Cys197–Cys222. Active-site charge relay system residues include His66 and Asp108. The active-site Charge relay system is Ser201.

The protein belongs to the peptidase S1 family. Kallikrein subfamily. As to expression, expressed in skin and, at lower levels, in lung, kidney, brain, heart and spleen. In skin, expressed in high suprabasal keratinocytes and in the luminal parts of hair follicles. Not detected in liver and skeletal muscle.

It localises to the secreted. The enzyme catalyses Cleavage of proteins with aromatic side chains in the P1 position.. With respect to regulation, inhibited by Zn2+ and Cu2+ at low micromolar concentrations. Inhibited by SERPINA12. Functionally, may catalyze the degradation of intercellular cohesive structures in the cornified layer of the skin in the continuous shedding of cells from the skin surface. Specific for amino acid residues with aromatic side chains in the P1 position. Cleaves insulin A chain at '14-Tyr-|-Gln-15' and insulin B chain at '6-Leu-|-Cys-7', '16-Tyr-|-Leu-17', '25-Phe-|-Tyr-26' and '26-Tyr-|-Thr-27'. Could play a role in the activation of precursors to inflammatory cytokines. The polypeptide is Kallikrein-7 (Klk7) (Mus musculus (Mouse)).